Here is a 121-residue protein sequence, read N- to C-terminus: Large ribosomal subunit protein eL31 (121 aa).

The protein belongs to the eukaryotic ribosomal protein eL31 family.

This Panax ginseng (Korean ginseng) protein is Large ribosomal subunit protein eL31 (RPL31).